The primary structure comprises 137 residues: Large ribosomal subunit protein bL17 (137 aa).

It belongs to the bacterial ribosomal protein bL17 family. As to quaternary structure, part of the 50S ribosomal subunit. Contacts protein L32.

This Rickettsia typhi (strain ATCC VR-144 / Wilmington) protein is Large ribosomal subunit protein bL17.